Consider the following 361-residue polypeptide: 3-galactosyl-N-acetylglucosaminide 4-alpha-L-fucosyltransferase FUT3 (361 aa).

Residues 1–15 lie on the Cytoplasmic side of the membrane; it reads MDPLGAAKPQWPWRR. A helical; Signal-anchor for type II membrane protein transmembrane segment spans residues 16-34; that stretch reads CLAALLFQLLVAVCFFSYL. Over 35 to 361 the chain is Lumenal; sequence RVSRDDATGS…TVRSIAAWFT (327 aa). The disordered stretch occupies residues 39–58; sequence DDATGSPRAPSGSSRQDTTP. N-linked (GlcNAc...) asparagine glycosylation is found at asparagine 154 and asparagine 185.

The protein belongs to the glycosyltransferase 10 family. Glycosylated. In terms of tissue distribution, highly expressed in stomach, colon, small intestine, lung and kidney and to a lesser extent in salivary gland, bladder, uterus and liver.

The protein resides in the golgi apparatus. The protein localises to the golgi stack membrane. It carries out the reaction a beta-D-galactosyl-(1-&gt;3)-N-acetyl-beta-D-glucosaminyl derivative + GDP-beta-L-fucose = a beta-D-galactosyl-(1-&gt;3)-[alpha-L-fucosyl-(1-&gt;4)]-N-acetyl-beta-D-glucosaminyl derivative + GDP + H(+). The enzyme catalyses an N-acetyl-alpha-neuraminyl-(2-&gt;3)-beta-D-galactosyl-(1-&gt;4)-N-acetyl-beta-D-glucosaminyl derivative + GDP-beta-L-fucose = an alpha-Neu5Ac-(2-&gt;3)-beta-D-Gal-(1-&gt;4)-[alpha-L-Fuc-(1-&gt;3)]-beta-D-GlcNAc derivative + GDP + H(+). The catalysed reaction is a beta-D-galactosyl-(1-&gt;4)-N-acetyl-beta-D-glucosaminyl derivative + GDP-beta-L-fucose = a beta-D-galactosyl-(1-&gt;4)-[alpha-L-fucosyl-(1-&gt;3)]-N-acetyl-beta-D-glucosaminyl derivative + GDP + H(+). It catalyses the reaction an alpha-Neu5Ac-(2-&gt;3)-beta-D-Gal-(1-&gt;4)-beta-D-GlcNAc-(1-&gt;3)-beta-D-Gal-(1-&gt;4)-[alpha-L-Fuc-(1-&gt;3)]-beta-D-GlcNAc derivative + GDP-beta-L-fucose = an alpha-Neu5Ac-(2-&gt;3)-beta-D-Gal-(1-&gt;4)-[alpha-L-Fuc-(1-&gt;3)]-beta-D-GlcNAc-(1-&gt;3)-beta-D-Gal-(1-&gt;4)-[alpha-L-Fuc-(1-&gt;3)]-beta-D-GlcNAc derivative + GDP + H(+). It carries out the reaction Lc4Cer + GDP-beta-L-fucose = a lactoside III(4)-a-Fuc-Lc4Cer + GDP + H(+). The enzyme catalyses a beta-D-Gal-(1-&gt;3)-beta-D-GlcNAc-(1-&gt;3)-beta-D-Gal-(1-&gt;4)-beta-D-Glc-(1&lt;-&gt;1')-Cer(d18:1(4E)) + GDP-beta-L-fucose = a III(4)-a-Fuc-Lc4Cer(d18:1(4E)) + GDP + H(+). The catalysed reaction is N-acetyl-alpha-neuraminosyl-(2-&gt;3)-beta-D-galactosyl-(1-&gt;3)-[N-acetyl-alpha-neuraminosyl-(2-&gt;6)]-N-acetyl-beta-D-glucosaminyl-(1-&gt;3)-beta-D-galactosyl-(1-&gt;4)-beta-D-glucosyl-(1&lt;-&gt;1')-N-acyl-sphing-4-enine + GDP-beta-L-fucose = N-acetyl-alpha-neuraminosyl-(2-&gt;3)-beta-D-galactosyl-(1-&gt;3)-alpha-L-fucosyl-(1-&gt;4)-[N-acetyl-alpha-neuraminosyl-(2-&gt;6)-N-acetyl-beta-D-glucosaminyl-(1-&gt;3)]-beta-D-galactosyl-(1-&gt;4)-beta-D-glucosyl-(1&lt;-&gt;1')-N-acyl-sphing-4-enine + GDP + H(+). It catalyses the reaction N-acetyl-alpha-neuraminosyl-(2-&gt;3)-beta-D-galactosyl-(1-&gt;3)-N-acetyl-beta-D-glucosaminyl-(1-&gt;3)-beta-D-galactosyl-(1-&gt;4)-beta-D-glucosyl-(1&lt;-&gt;1')-N-acyl-sphing-4-enine + GDP-beta-L-fucose = N-acetyl-alpha-neuraminosyl-(2-&gt;3)-beta-D-galactosyl-(1-&gt;3)-alpha-L-fucosyl-(1-&gt;4)-[N-acetyl-beta-D-glucosaminyl-(1-&gt;3)]-beta-D-galactosyl-(1-&gt;4)-beta-D-glucosyl-(1&lt;-&gt;1')-N-acyl-sphing-4-enine + GDP + H(+). It carries out the reaction beta-D-galactosyl-(1-&gt;3)-N-acetyl-D-glucosamine + GDP-beta-L-fucose = beta-D-galactosyl-(1-&gt;3)-[alpha-L-fucosyl-(1-&gt;4)]-N-acetyl-D-glucosamine + GDP + H(+). The enzyme catalyses alpha-L-Fuc-(1-&gt;2)-beta-D-Gal-(1-&gt;3)-D-GlcNAc + GDP-beta-L-fucose = alpha-L-Fuc-(1-&gt;2)-beta-D-Gal-(1-&gt;3)-[alpha-L-Fuc-(1-&gt;4)]-D-GlcNAc + GDP + H(+). The catalysed reaction is alpha-L-Fuc-(1-&gt;2)-beta-D-Gal-(1-&gt;4)-D-GlcNAc + GDP-beta-L-fucose = alpha-L-Fuc-(1-&gt;2)-beta-D-Gal-(1-&gt;4)-[alpha-L-Fuc-(1-&gt;3)]-D-GlcNAc + GDP + H(+). It catalyses the reaction beta-D-galactosyl-(1-&gt;4)-N-acetyl-D-glucosamine + GDP-beta-L-fucose = beta-D-galactosyl-(1-&gt;4)-[alpha-L-fucosyl-(1-&gt;3)]-N-acetyl-D-glucosamine + GDP + H(+). It carries out the reaction lactose + GDP-beta-L-fucose = beta-D-galactosyl-(1-&gt;4)-[alpha-L-fucosyl-(1-&gt;3)]-D-glucose + GDP + H(+). The enzyme catalyses an alpha-Neu5Ac-(2-&gt;3)-beta-D-Gal-(1-&gt;3)-D-GlcNAc derivative + GDP-beta-L-fucose = an alpha-Neu5Ac-(2-&gt;3)-beta-D-Gal-(1-&gt;3)-[alpha-L-Fuc-(1-&gt;4)]-beta-D-GlcNAc derivative + GDP + H(+). Its pathway is protein modification; protein glycosylation. Functionally, catalyzes the transfer of L-fucose, from a guanosine diphosphate-beta-L-fucose, to both the subterminal N-acetyl glucosamine (GlcNAc) of type 1 chain (beta-D-Gal-(1-&gt;3)-beta-D-GlcNAc) glycolipids and oligosaccharides via an alpha(1,4) linkage, and the subterminal glucose (Glc) or GlcNAc of type 2 chain (beta-D-Gal-(1-&gt;4)-beta-D-GlcNAc) oligosaccharides via an alpha(1,3) linkage, independently of the presence of terminal alpha-L-fucosyl-(1,2) moieties on the terminal galactose of these acceptors. Through its catalytic activity, participates in the synthesis of antigens of the Lewis blood group system, i.e. Lewis a (Le(a)), lewis b (Le(b)), Lewis x/SSEA-1 (Le(x)) and lewis y (Le(y)) antigens. Also catalyzes the transfer of L-fucose to subterminal GlcNAc of sialyl- and disialyl-lactotetraosylceramide to produce sialyl Lewis a (sLe(a)) and disialyl Lewis a via an alpha(1,4) linkage and therefore may regulate cell surface sLe(a) expression and consequently regulates adhesive properties to E-selectin, cell proliferation and migration. Catalyzes the transfer of an L-fucose to 3'-sialyl-N-acetyllactosamine by an alpha(1,3) linkage, which allows the formation of sialyl-Lewis x structure and therefore may regulate the sialyl-Lewis x surface antigen expression and consequently adhesive properties to E-selectin. Prefers type 1 chain over type 2 acceptors. Type 1 tetrasaccharide is a better acceptor than type 1 disaccharide suggesting that a beta anomeric configuration of GlcNAc in the substrate is preferred. Lewis-positive (Le(+)) individuals have an active enzyme while Lewis-negative (Le(-)) individuals have an inactive enzyme. In Homo sapiens (Human), this protein is 3-galactosyl-N-acetylglucosaminide 4-alpha-L-fucosyltransferase FUT3.